Reading from the N-terminus, the 344-residue chain is Heat-inducible transcription repressor HrcA (344 aa).

It belongs to the HrcA family.

Its function is as follows. Negative regulator of class I heat shock genes (grpE-dnaK-dnaJ and groELS operons). Prevents heat-shock induction of these operons. The sequence is that of Heat-inducible transcription repressor HrcA from Streptococcus pneumoniae (strain P1031).